A 228-amino-acid polypeptide reads, in one-letter code: LNPKKKENNGVKNGDREKQHETGNTIFRGSPDKYLTEQGWMAQSDLGSRALVEDLVRYKLCQRSLVPEPSGAASCALHSAMRAAGDEFEERFRQAFSEISTQIHVTPGTAYARFAEVAGSLFQGGVNWGRIVAFFVFGAALCAESVNKEMSPLLPRIQDWMVTYLETNLRDWIQSNGGWNGFLTLYGDGAIEEARRQREGNWASLKTVLTGAVALGALMTVGALFASK.

Residues 1 to 21 (LNPKKKENNGVKNGDREKQHE) are compositionally biased toward basic and acidic residues. The tract at residues 1 to 29 (LNPKKKENNGVKNGDREKQHETGNTIFRG) is disordered. The short motif at 120–139 (SLFQGGVNWGRIVAFFVFGA) is the BH1 element. The short motif at 171–186 (DWIQSNGGWNGFLTLY) is the BH2 element. Residues 207-227 (TVLTGAVALGALMTVGALFAS) traverse the membrane as a helical segment.

This sequence belongs to the Bcl-2 family.

The protein resides in the membrane. Could be the homolog of mammalian Bcl-W. The sequence is that of Apoptosis regulator R1 from Xenopus laevis (African clawed frog).